The following is a 633-amino-acid chain: Histone-lysine N-methyltransferase Su(var)3-9 (633 aa).

Positions 213 to 271 (YIVEKIESVEVVQFQPVFFVKWLGYDVSANTWESYVNLSDCAEMEKFVERHLQLHQHYI) constitute a Chromo domain. Positions 407–472 (VGCMCRHQSG…SCTNRVVQNG (66 aa)) constitute a Pre-SET domain. Residues C409, C411, C419, C425, C426, C454, C458, C460, and C464 each contribute to the Zn(2+) site. Residues 475-601 (HPLVLFKTSN…AGEELSFDYI (127 aa)) enclose the SET domain. S-adenosyl-L-methionine-binding positions include 486 to 488 (SGW), Y529, and 558 to 559 (NH). Residues C561, C621, C623, and C628 each coordinate Zn(2+). Residues 617 to 633 (ARVQCRCGAANCRKVLF) enclose the Post-SET domain.

This sequence belongs to the class V-like SAM-binding methyltransferase superfamily. Histone-lysine methyltransferase family. Suvar3-9 subfamily. Interacts with Su(var)205 and Su(var)3-7. Probably associates with HDAC1/Rpd3.

The protein resides in the nucleus. It is found in the chromosome. The protein localises to the centromere. It catalyses the reaction L-lysyl(9)-[histone H3] + 3 S-adenosyl-L-methionine = N(6),N(6),N(6)-trimethyl-L-lysyl(9)-[histone H3] + 3 S-adenosyl-L-homocysteine + 3 H(+). Functionally, histone methyltransferase that specifically trimethylates 'Lys-9' of histone H3 using monomethylated H3 'Lys-9' as substrate. H3 'Lys-9' trimethylation represents a specific tag for epigenetic transcriptional repression by recruiting Su(var)205/HP1 to methylated histones. Mainly functions in heterochromatin regions, thereby playing a central role in the establishment of constitutive heterochromatin at pericentric regions. Involved in heterochromatic gene silencing including the modification of position-effect-variegation. This chain is Histone-lysine N-methyltransferase Su(var)3-9 (Su(var)3-9), found in Drosophila pseudoobscura pseudoobscura (Fruit fly).